The following is a 428-amino-acid chain: Histidine--tRNA ligase (428 aa).

It belongs to the class-II aminoacyl-tRNA synthetase family. Homodimer.

Its subcellular location is the cytoplasm. The enzyme catalyses tRNA(His) + L-histidine + ATP = L-histidyl-tRNA(His) + AMP + diphosphate + H(+). The sequence is that of Histidine--tRNA ligase from Mesomycoplasma hyopneumoniae (strain 232) (Mycoplasma hyopneumoniae).